We begin with the raw amino-acid sequence, 212 residues long: Large ribosomal subunit protein uL1 (212 aa).

Belongs to the universal ribosomal protein uL1 family. As to quaternary structure, part of the 50S ribosomal subunit.

Its function is as follows. Binds directly to 23S rRNA. Probably involved in E site tRNA release. Protein L1 is also a translational repressor protein, it controls the translation of its operon by binding to its mRNA. This Haloferax volcanii (strain ATCC 29605 / DSM 3757 / JCM 8879 / NBRC 14742 / NCIMB 2012 / VKM B-1768 / DS2) (Halobacterium volcanii) protein is Large ribosomal subunit protein uL1.